The chain runs to 158 residues: Cytochrome b6-f complex subunit 4 (158 aa).

Helical transmembrane passes span 34-54 (LLYI…GLAV), 93-113 (LLGV…PFLE), and 129-149 (TVFL…TLPI).

The protein belongs to the cytochrome b family. PetD subfamily. The 4 large subunits of the cytochrome b6-f complex are cytochrome b6, subunit IV (17 kDa polypeptide, petD), cytochrome f and the Rieske protein, while the 4 small subunits are petG, petL, petM and petN. The complex functions as a dimer.

It localises to the plastid. Its subcellular location is the chloroplast thylakoid membrane. Component of the cytochrome b6-f complex, which mediates electron transfer between photosystem II (PSII) and photosystem I (PSI), cyclic electron flow around PSI, and state transitions. The protein is Cytochrome b6-f complex subunit 4 of Liriodendron tulipifera (Tuliptree).